Here is a 26-residue protein sequence, read N- to C-terminus: Protein YsdD (26 aa).

The tract at residues M1–V26 is disordered.

This Escherichia coli (strain K12) protein is Protein YsdD.